Consider the following 1021-residue polypeptide: Immunoglobulin superfamily member 2 (1021 aa).

An N-terminal signal peptide occupies residues 1–20 (MAGISYVASFFLLLTKLSIG). At 21–954 (QREVTVQKGP…LPSRICSSAP (934 aa)) the chain is on the extracellular side. Ig-like C2-type domains lie at 22–139 (REVT…AKTN), 144–265 (PDTL…WMFI), 279–389 (PAVK…RTGS), 408–525 (PAAR…RDLS), 541–651 (LQVS…NSLY), 656–794 (PRAS…WHKL), and 808–925 (PTGS…KWIN). 2 disulfides stabilise this stretch: cysteine 43-cysteine 121 and cysteine 168-cysteine 249. A glycan (N-linked (GlcNAc...) asparagine) is linked at asparagine 44. The short motif at 253 to 255 (EWI) is the EWI motif element. Disulfide bonds link cysteine 304–cysteine 377, cysteine 434–cysteine 511, cysteine 562–cysteine 640, cysteine 697–cysteine 778, and cysteine 834–cysteine 909. Asparagine 322 carries an N-linked (GlcNAc...) asparagine glycan. Residues 955 to 975 (LLYFLFICPFVLLLLLLISLL) form a helical membrane-spanning segment. Over 976 to 1021 (CLYWKARKLSTLRSNTRKEKALWVDLKEAGGVTTNRREDEEEDEGN) the chain is Cytoplasmic.

In terms of processing, N-glycosylated. As to expression, expressed in lung, thymus and small intestine. Detected in cutaneous dendritic cells, activated T-cells, monocytes and granulocytes as well as with epithelial cells with dendritic morphology. Expressed in some leukemic cells, the CD4(+) CD56(+) blastic tumor cells, as well as in Langerhans cells from LCH (Langerhans cell histiocytosis) patients.

The protein localises to the membrane. Its function is as follows. Plays a role as inhibitor of T-cells proliferation induced by CD3. Inhibits expression of IL2RA on activated T-cells and secretion of IL2. Inhibits tyrosine kinases that are required for IL2 production and cellular proliferation. Inhibits phospholipase C-gamma-1/PLCG1 phosphorylation and subsequent CD3-induced changes in intracellular free calcium. Prevents nuclear translocation of nuclear factor of activated T-cell to the nucleus. Plays a role in the inhibition of T-cell proliferation via IL10 secretion by cutaneous dendritic cells. May be a marker of CD4(+) CD56(+) leukemic tumor cells. The protein is Immunoglobulin superfamily member 2 (CD101) of Homo sapiens (Human).